A 253-amino-acid chain; its full sequence is Hydroxyacylglutathione hydrolase (253 aa).

Zn(2+) contacts are provided by histidine 59, histidine 61, aspartate 63, histidine 64, histidine 118, aspartate 143, and histidine 181.

The protein belongs to the metallo-beta-lactamase superfamily. Glyoxalase II family. As to quaternary structure, monomer. Requires Zn(2+) as cofactor.

The enzyme catalyses an S-(2-hydroxyacyl)glutathione + H2O = a 2-hydroxy carboxylate + glutathione + H(+). It participates in secondary metabolite metabolism; methylglyoxal degradation; (R)-lactate from methylglyoxal: step 2/2. Thiolesterase that catalyzes the hydrolysis of S-D-lactoyl-glutathione to form glutathione and D-lactic acid. The chain is Hydroxyacylglutathione hydrolase from Prochlorococcus marinus (strain SARG / CCMP1375 / SS120).